The chain runs to 806 residues: Lon protease 1 (806 aa).

The Lon N-terminal domain occupies 31 to 235 (VPLIAVPSHP…KVLELIYEEL (205 aa)). ATP is bound at residue 389 to 396 (GPPGVGKT). Residues 626–806 (AMYSGMVMGL…NMREVIKLLF (181 aa)) form the Lon proteolytic domain. Active-site residues include S714 and K757.

This sequence belongs to the peptidase S16 family. As to quaternary structure, homohexamer. Organized in a ring with a central cavity.

The protein resides in the cytoplasm. The enzyme catalyses Hydrolysis of proteins in presence of ATP.. ATP-dependent serine protease that mediates the selective degradation of mutant and abnormal proteins as well as certain short-lived regulatory proteins. Required for cellular homeostasis and for survival from DNA damage and developmental changes induced by stress. Degrades polypeptides processively to yield small peptide fragments that are 5 to 10 amino acids long. Binds to DNA in a double-stranded, site-specific manner. This Borreliella burgdorferi (strain ATCC 35210 / DSM 4680 / CIP 102532 / B31) (Borrelia burgdorferi) protein is Lon protease 1.